Here is a 293-residue protein sequence, read N- to C-terminus: 4-hydroxy-tetrahydrodipicolinate synthase (293 aa).

T45 contacts pyruvate. Y133 (proton donor/acceptor) is an active-site residue. K162 functions as the Schiff-base intermediate with substrate in the catalytic mechanism. Pyruvate is bound at residue I204.

Belongs to the DapA family. As to quaternary structure, homotetramer; dimer of dimers.

It is found in the cytoplasm. The catalysed reaction is L-aspartate 4-semialdehyde + pyruvate = (2S,4S)-4-hydroxy-2,3,4,5-tetrahydrodipicolinate + H2O + H(+). The protein operates within amino-acid biosynthesis; L-lysine biosynthesis via DAP pathway; (S)-tetrahydrodipicolinate from L-aspartate: step 3/4. Its function is as follows. Catalyzes the condensation of (S)-aspartate-beta-semialdehyde [(S)-ASA] and pyruvate to 4-hydroxy-tetrahydrodipicolinate (HTPA). The sequence is that of 4-hydroxy-tetrahydrodipicolinate synthase from Mesorhizobium japonicum (strain LMG 29417 / CECT 9101 / MAFF 303099) (Mesorhizobium loti (strain MAFF 303099)).